A 285-amino-acid chain; its full sequence is Bifunctional protein FolD (285 aa).

NADP(+) is bound by residues 165-167 (GRS), Ser-190, and Ile-231.

It belongs to the tetrahydrofolate dehydrogenase/cyclohydrolase family. Homodimer.

It catalyses the reaction (6R)-5,10-methylene-5,6,7,8-tetrahydrofolate + NADP(+) = (6R)-5,10-methenyltetrahydrofolate + NADPH. It carries out the reaction (6R)-5,10-methenyltetrahydrofolate + H2O = (6R)-10-formyltetrahydrofolate + H(+). It participates in one-carbon metabolism; tetrahydrofolate interconversion. In terms of biological role, catalyzes the oxidation of 5,10-methylenetetrahydrofolate to 5,10-methenyltetrahydrofolate and then the hydrolysis of 5,10-methenyltetrahydrofolate to 10-formyltetrahydrofolate. This chain is Bifunctional protein FolD, found in Verminephrobacter eiseniae (strain EF01-2).